A 446-amino-acid polypeptide reads, in one-letter code: MSGSSTPKSLPTSGQQSLHDIKHPLSCSPSAEDDAAGENGAVIIESPSPDLPNTEPSSLADKDLSLPNGTPADTSSPASSSSLLNRLQLDDDLDGETRDLFVTVDDPKKHVCTMETYITYRVSTKTTRTEFDLPEYSIRRRYQDFDWLRNKLEETQPTHFIPPLPEKFVVKGVVDRFSEEFVETRRKALDKFLKRIADHPVLSFNEHFNVFLTAKDLNSHKKQGITLLSKMGESVRYVTSGYKLRNRPVEFATITDYLDTFQLKLGTIDRIAQRIIKEEVEYLMELREYGPVYSTWSGLERELNEPLEGVSACVGNCSTALEELTEDMSEDFLPVIREYMLYSESMKTVLKKRDQVQAEYEAKAEAAALKREERSTVPTDVEKCQDKVECFNADLKADMDRWQNNKRQDFRQLLMGMADKNIQYYEKCLTAWESIIPLLQDKQEPK.

Over residues Met-1–Leu-18 the composition is skewed to polar residues. A disordered region spans residues Met-1–Leu-84. Positions Thr-70–Leu-84 are enriched in low complexity. Residues Arg-98–Ser-219 enclose the PX domain. Positions 141, 143, 171, and 185 each coordinate a 1,2-diacyl-sn-glycero-3-phospho-(1D-myo-inositol-3-phosphate). In terms of domain architecture, BAR spans Lys-243–Lys-446.

It belongs to the sorting nexin family.

The protein resides in the early endosome membrane. Involved in the regulation of endocytosis and in several stages of intracellular trafficking. Together with snx4, involved in autophagosome assembly. In Xenopus tropicalis (Western clawed frog), this protein is Sorting nexin-30 (snx30).